The sequence spans 463 residues: tRNA modification GTPase MnmE (463 aa).

Residues Arg30, Glu92, and Arg132 each coordinate (6S)-5-formyl-5,6,7,8-tetrahydrofolate. The region spanning 227–386 (GLRVALVGRP…LVQAVLERCG (160 aa)) is the TrmE-type G domain. Asn237 provides a ligand contact to K(+). Residues 237 to 242 (NVGKSS), 256 to 262 (TDLPGTT), 281 to 284 (DTAG), and 342 to 345 (NKAD) each bind GTP. Residue Ser241 participates in Mg(2+) binding. The K(+) site is built by Thr256, Leu258, and Thr261. Thr262 contributes to the Mg(2+) binding site. (6S)-5-formyl-5,6,7,8-tetrahydrofolate is bound at residue Lys463.

It belongs to the TRAFAC class TrmE-Era-EngA-EngB-Septin-like GTPase superfamily. TrmE GTPase family. As to quaternary structure, homodimer. Heterotetramer of two MnmE and two MnmG subunits. It depends on K(+) as a cofactor.

It localises to the cytoplasm. Functionally, exhibits a very high intrinsic GTPase hydrolysis rate. Involved in the addition of a carboxymethylaminomethyl (cmnm) group at the wobble position (U34) of certain tRNAs, forming tRNA-cmnm(5)s(2)U34. The chain is tRNA modification GTPase MnmE from Synechococcus sp. (strain CC9311).